The primary structure comprises 377 residues: Oleosin-B4 (377 aa).

The polar stretch occupies residues 1–37 (MRNEIQNETAQTDQTQGSMFSFFNLFPFLLPMFEVIK). The next 3 helical transmembrane spans lie at 16–36 (QGSM…FEVI), 38–58 (MVVA…TLSG), and 69–89 (LFII…VLAA). A hydrophobic region spans residues 38-133 (MVVASVASVV…IIPESIKPSN (96 aa)). 3 repeat units span residues 115–124 (IPESIKPSNI), 125–134 (IPESIKPSNI), and 135–144 (IPEGIKPSNI). A 3 X 10 AA tandem repeats of I-P-E-[SG]-I-K-P-S-N-[IV] region spans residues 115 to 144 (IPESIKPSNIIPESIKPSNIIPEGIKPSNI). The segment at 158-377 (KIKAKKEEKS…SSHGSGGKHI (220 aa)) is disordered. Composition is skewed to basic and acidic residues over residues 162–185 (KKEE…KGED) and 195–231 (DEDK…EGKH). The 2-1 repeat unit spans residues 196–202 (EDKHGSG). One copy of the 2.1 repeat lies at 196–202 (EDKHGSG). The tract at residues 196 to 222 (EDKHGSGAKHGKGESKHGKGESTHGKG) is 3 X 6 AA tandem repeats of E-[SD]-[KT]-H-G-[KS]-G. Residues 204-208 (KHGKG) form a 2-2; truncated repeat. Tandem repeats lie at residues 209–215 (ESKHGKG), 216–222 (ESTHGKG), 230–247 (KHGS…GSGG), 260–277 (KHES…GSEG), 278–295 (KHGS…GSGG), 296–313 (KHES…GSGG), and 355–359 (SSDGS). The tract at residues 230-313 (KHGSGGSSMG…MGGGKHGSGG (84 aa)) is 4 X 18 AA tandem repeats of K-H-E-S-G-G-[SA]-[PSA]-M-G-G-G-K-H-G-S-[GE]-G. Positions 232 to 244 (GSGGSSMGGGKHG) are enriched in gly residues. Positions 247–263 (GKHETGGKHGSGGKHES) are enriched in basic and acidic residues. Gly residues-rich tracts occupy residues 280–292 (GSGG…GKHG) and 302–314 (SAMG…SGGK). Residues 350–369 (SSTSESSDGSSDGSSSDGSS) show a composition bias toward low complexity. The tract at residues 355–368 (SSDGSSDGSSSDGS) is 3 X 5 AA tandem repeats of S-S-D-G-S. One copy of the 4-2; truncated repeat lies at 360 to 363 (SDGS). The stretch at 364–368 (SSDGS) is one 4-3 repeat.

It belongs to the oleosin family. The full-length protein is found in the tapetal lipid bodies of immature anthers, the proteolytically cleaved C-terminal product is found on the coats of pollen grains. No expression is detected in other flower organs, siliques or seedlings.

Its subcellular location is the lipid droplet. The protein resides in the membrane. Functionally, many of the major pollen coat proteins are derived from endoproteolytic cleavage of oleosin-like proteins. This Brassica napus (Rape) protein is Oleosin-B4.